The primary structure comprises 259 residues: Chymotrypsin-1 (259 aa).

A signal peptide spans 1-17 (MLRKVFAVVSVLLVVSA). Positions 18-32 (AKVTKLVLDDNYVNR) are cleaved as a propeptide — activation peptide. Positions 33-255 (VVGGEVAKNG…YHDWVRTTMA (223 aa)) constitute a Peptidase S1 domain. A disulfide bridge links cysteine 59 with cysteine 75. Catalysis depends on charge relay system residues histidine 74 and aspartate 119. 2 disulfide bridges follow: cysteine 182/cysteine 198 and cysteine 208/cysteine 232. Catalysis depends on serine 212, which acts as the Charge relay system.

Belongs to the peptidase S1 family. As to expression, after blood feeding, expression is induced in the midgut epithelium, followed by secretion into the midgut lumen.

It localises to the secreted. The enzyme catalyses Preferential cleavage: Tyr-|-Xaa, Trp-|-Xaa, Phe-|-Xaa, Leu-|-Xaa.. The sequence is that of Chymotrypsin-1 (CHYM1) from Anopheles gambiae (African malaria mosquito).